The following is a 171-amino-acid chain: CDP-archaeol synthase (171 aa).

4 helical membrane-spanning segments follow: residues 11–31, 65–85, 129–149, and 151–171; these read VLYV…GLVF, VGLV…IGVI, LILV…IMLI, and LVLH…DVWY.

It belongs to the CDP-archaeol synthase family. It depends on Mg(2+) as a cofactor.

Its subcellular location is the cell membrane. It catalyses the reaction 2,3-bis-O-(geranylgeranyl)-sn-glycerol 1-phosphate + CTP + H(+) = CDP-2,3-bis-O-(geranylgeranyl)-sn-glycerol + diphosphate. Its pathway is membrane lipid metabolism; glycerophospholipid metabolism. Its function is as follows. Catalyzes the formation of CDP-2,3-bis-(O-geranylgeranyl)-sn-glycerol (CDP-archaeol) from 2,3-bis-(O-geranylgeranyl)-sn-glycerol 1-phosphate (DGGGP) and CTP. This reaction is the third ether-bond-formation step in the biosynthesis of archaeal membrane lipids. The sequence is that of CDP-archaeol synthase from Methanothermobacter thermautotrophicus (strain ATCC 29096 / DSM 1053 / JCM 10044 / NBRC 100330 / Delta H) (Methanobacterium thermoautotrophicum).